We begin with the raw amino-acid sequence, 449 residues long: Naphthalene 1,2-dioxygenase system, large oxygenase component (449 aa).

Positions 39 to 137 constitute a Rieske domain; the sequence is WLFLTHDSLI…LNKKCLGLKE (99 aa). The [2Fe-2S] cluster site is built by cysteine 81, histidine 83, cysteine 101, and histidine 104. Residues histidine 208, histidine 213, and aspartate 362 each contribute to the Fe cation site.

Belongs to the bacterial ring-hydroxylating dioxygenase alpha subunit family. As to quaternary structure, the naphthalene dioxygenase (NDO) multicomponent enzyme system is composed of an electron transfer component and a dioxygenase component (iron sulfur protein (ISP)). The electron transfer component is composed of a ferredoxin reductase (NdoR) and a ferredoxin (NdoA), and the dioxygenase component is formed of a heterohexamer (trimer of heterodimers) of three large alpha subunits (NdoB) and three small beta subunits (NdoC). [2Fe-2S] cluster is required as a cofactor. It depends on Fe(2+) as a cofactor.

It carries out the reaction naphthalene + NADH + O2 + H(+) = (1R,2S)-1,2-dihydronaphthalene-1,2-diol + NAD(+). The protein operates within aromatic compound metabolism; naphthalene degradation. Component of the naphthalene dioxygenase (NDO) multicomponent enzyme system which catalyzes the incorporation of both atoms of molecular oxygen into naphthalene to form cis-(1R,2S)-dihydroxy-1,2-dihydronaphthalene. The alpha subunit has a catalytic role in the holoenzyme. The chain is Naphthalene 1,2-dioxygenase system, large oxygenase component from Pseudomonas fluorescens.